Here is a 349-residue protein sequence, read N- to C-terminus: Fructose-1,6-bisphosphatase class 1 (349 aa).

Positions 91, 110, 112, and 113 each coordinate Mg(2+). Residues 113-116 and Asn-205 contribute to the substrate site; that span reads DGSS. Glu-277 is a binding site for Mg(2+).

Belongs to the FBPase class 1 family. As to quaternary structure, homotetramer. The cofactor is Mg(2+).

The protein resides in the cytoplasm. It carries out the reaction beta-D-fructose 1,6-bisphosphate + H2O = beta-D-fructose 6-phosphate + phosphate. It functions in the pathway carbohydrate biosynthesis; gluconeogenesis. The protein is Fructose-1,6-bisphosphatase class 1 of Rhizobium meliloti (strain 1021) (Ensifer meliloti).